The primary structure comprises 23 residues: ACGSCRKKCKGPGKCINGRCKCY.

3 disulfide bridges follow: cysteine 2–cysteine 15, cysteine 5–cysteine 20, and cysteine 9–cysteine 22. The segment at 13-20 (GKCINGRC) is interaction with Ca(2+)-activated K(+) channels. Tyrosine 23 carries the tyrosine amide modification.

In terms of tissue distribution, expressed by the venom gland.

The protein resides in the secreted. In terms of biological role, reversibly blocks Shaker B potassium channels, with a dissociation constant of 200 nM. The polypeptide is Potassium channel toxin alpha-KTx 13.3 (Tityus pachyurus (Colombian scorpion)).